The chain runs to 511 residues: Bifunctional purine biosynthesis protein PurH (511 aa).

Positions 1–145 (MKKRALVSVS…KNHKFVSVIV (145 aa)) constitute an MGS-like domain.

It belongs to the PurH family.

The catalysed reaction is (6R)-10-formyltetrahydrofolate + 5-amino-1-(5-phospho-beta-D-ribosyl)imidazole-4-carboxamide = 5-formamido-1-(5-phospho-D-ribosyl)imidazole-4-carboxamide + (6S)-5,6,7,8-tetrahydrofolate. The enzyme catalyses IMP + H2O = 5-formamido-1-(5-phospho-D-ribosyl)imidazole-4-carboxamide. Its pathway is purine metabolism; IMP biosynthesis via de novo pathway; 5-formamido-1-(5-phospho-D-ribosyl)imidazole-4-carboxamide from 5-amino-1-(5-phospho-D-ribosyl)imidazole-4-carboxamide (10-formyl THF route): step 1/1. It functions in the pathway purine metabolism; IMP biosynthesis via de novo pathway; IMP from 5-formamido-1-(5-phospho-D-ribosyl)imidazole-4-carboxamide: step 1/1. The protein is Bifunctional purine biosynthesis protein PurH of Bacillus thuringiensis (strain Al Hakam).